The primary structure comprises 199 residues: RNA pyrophosphohydrolase (199 aa).

In terms of domain architecture, Nudix hydrolase spans 6-154 (GYRPNVGIVL…KREVYELALS (149 aa)). The short motif at 38–59 (GGIQHGESPEQAMYRELHEEVG) is the Nudix box element.

This sequence belongs to the Nudix hydrolase family. RppH subfamily. A divalent metal cation serves as cofactor.

Accelerates the degradation of transcripts by removing pyrophosphate from the 5'-end of triphosphorylated RNA, leading to a more labile monophosphorylated state that can stimulate subsequent ribonuclease cleavage. This is RNA pyrophosphohydrolase from Polynucleobacter asymbioticus (strain DSM 18221 / CIP 109841 / QLW-P1DMWA-1) (Polynucleobacter necessarius subsp. asymbioticus).